The following is a 337-amino-acid chain: Anthranilate phosphoribosyltransferase (337 aa).

Residues glycine 81, 84 to 85, threonine 89, 91 to 94, 109 to 117, and threonine 121 each bind 5-phospho-alpha-D-ribose 1-diphosphate; these read GD, NIST, and KHGNRALSS. Glycine 81 lines the anthranilate pocket. Serine 93 serves as a coordination point for Mg(2+). Residue asparagine 112 coordinates anthranilate. Position 167 (arginine 167) interacts with anthranilate. The Mg(2+) site is built by aspartate 225 and glutamate 226.

This sequence belongs to the anthranilate phosphoribosyltransferase family. Homodimer. The cofactor is Mg(2+).

The catalysed reaction is N-(5-phospho-beta-D-ribosyl)anthranilate + diphosphate = 5-phospho-alpha-D-ribose 1-diphosphate + anthranilate. It functions in the pathway amino-acid biosynthesis; L-tryptophan biosynthesis; L-tryptophan from chorismate: step 2/5. Catalyzes the transfer of the phosphoribosyl group of 5-phosphorylribose-1-pyrophosphate (PRPP) to anthranilate to yield N-(5'-phosphoribosyl)-anthranilate (PRA). The polypeptide is Anthranilate phosphoribosyltransferase (Sinorhizobium medicae (strain WSM419) (Ensifer medicae)).